The sequence spans 394 residues: Obg-like ATPase 1 (394 aa).

One can recognise an OBG-type G domain in the interval 21–285 (LKAGIVGLAN…MSPEDAEEEL (265 aa)). 30–35 (NVGKST) contributes to the ATP binding site. 2 residues coordinate Mg(2+): Ser34 and Thr55. Thr89 carries the phosphothreonine modification. Lys98 is covalently cross-linked (Glycyl lysine isopeptide (Lys-Gly) (interchain with G-Cter in ubiquitin)). 2 positions are modified to phosphoserine: Ser116 and Ser119. An ATP-binding site is contributed by Leu233. The TGS domain maps to 306–389 (DLISFFTCGP…EDGDIIYFRA (84 aa)).

Belongs to the TRAFAC class OBG-HflX-like GTPase superfamily. OBG GTPase family. YchF/OLA1 subfamily. In terms of assembly, monomer. Interacts with the 26S proteasome subunit RPT6. The cofactor is Mg(2+).

It localises to the cytoplasm. In terms of biological role, hydrolyzes ATP, and can also hydrolyze GTP with lower efficiency. Has lower affinity for GTP. This Saccharomyces cerevisiae (strain ATCC 204508 / S288c) (Baker's yeast) protein is Obg-like ATPase 1.